Consider the following 400-residue polypeptide: Argininosuccinate synthase (400 aa).

Position 8-16 (Ala8–Ser16) interacts with ATP. Residues Tyr87 and Ser92 each contribute to the L-citrulline site. ATP is bound at residue Gly117. Residues Thr119, Asn123, and Asp124 each contribute to the L-aspartate site. L-citrulline is bound at residue Asn123. The L-citrulline site is built by Arg127, Ser175, Glu259, and Tyr271.

This sequence belongs to the argininosuccinate synthase family. Type 1 subfamily. Homotetramer.

Its subcellular location is the cytoplasm. It catalyses the reaction L-citrulline + L-aspartate + ATP = 2-(N(omega)-L-arginino)succinate + AMP + diphosphate + H(+). The protein operates within amino-acid biosynthesis; L-arginine biosynthesis; L-arginine from L-ornithine and carbamoyl phosphate: step 2/3. The chain is Argininosuccinate synthase from Parafrankia sp. (strain EAN1pec).